A 343-amino-acid chain; its full sequence is L-ornithine/L-arginine 3-hydroxylase (343 aa).

Positions 147 and 149 each coordinate Fe cation. The segment covering 199–215 (MPDNSHLPQNTAESTGD) has biased composition (polar residues). The segment at 199-218 (MPDNSHLPQNTAESTGDPTK) is disordered. H302 provides a ligand contact to Fe cation. Residue R316 participates in 2-oxoglutarate binding.

The protein belongs to the clavaminate synthase family. Fe(2+) is required as a cofactor.

The catalysed reaction is L-ornithine + 2-oxoglutarate + O2 = (3S)-3-hydroxy-L-ornithine + succinate + CO2. The enzyme catalyses L-arginine + 2-oxoglutarate + O2 = (2S,3S)-hydroxyarginine + succinate + CO2. Functionally, alpha-ketoglutarate-dependent dioxygenase that in vitro catalyzes the regio- and stereoselective hydroxylation of L-ornithine and L-arginine, leading to (3S)-3-hydroxy-L-ornithine and (3S)-3-hydroxy-L-arginine, respectively. Cannot use L-lysine, D-ornithine, or D-arginine as substrate. The sequence is that of L-ornithine/L-arginine 3-hydroxylase from Catenulispora acidiphila (strain DSM 44928 / JCM 14897 / NBRC 102108 / NRRL B-24433 / ID139908).